A 388-amino-acid polypeptide reads, in one-letter code: Chorismate synthase (388 aa).

Positions 39 and 45 each coordinate NADP(+). Residues 132–134 (RSS), 251–252 (NA), Gly296, 311–315 (KPIPT), and Arg337 contribute to the FMN site.

The protein belongs to the chorismate synthase family. Homotetramer. It depends on FMNH2 as a cofactor.

It carries out the reaction 5-O-(1-carboxyvinyl)-3-phosphoshikimate = chorismate + phosphate. The protein operates within metabolic intermediate biosynthesis; chorismate biosynthesis; chorismate from D-erythrose 4-phosphate and phosphoenolpyruvate: step 7/7. Its function is as follows. Catalyzes the anti-1,4-elimination of the C-3 phosphate and the C-6 proR hydrogen from 5-enolpyruvylshikimate-3-phosphate (EPSP) to yield chorismate, which is the branch point compound that serves as the starting substrate for the three terminal pathways of aromatic amino acid biosynthesis. This reaction introduces a second double bond into the aromatic ring system. The sequence is that of Chorismate synthase from Staphylococcus aureus (strain Mu50 / ATCC 700699).